The primary structure comprises 215 residues: Inositol diphosphatase DSP1 (215 aa).

Positions 58–209 (NFSMVDNGIF…VSSFSHIPMS (152 aa)) constitute a Tyrosine-protein phosphatase domain. Residues 114–126 (FGIEGNKEPFVNI) form a WPD loop important for active site topology region. Positions 125, 126, 129, and 130 each coordinate 1D-myo-inositol hexakisphosphate. Catalysis depends on Cys-150, which acts as the Phosphocysteine intermediate.

The protein belongs to the protein-tyrosine phosphatase family. Atypical dual-specificity phosphatase Siw14-like subfamily. As to quaternary structure, homodimer and homohexamer; behaves as a monomer in solution. Highly expressed in siliques and at lower levels in roots, leaves and flowers.

It catalyses the reaction 5-diphospho-1D-myo-inositol 1,2,3,4,6-pentakisphosphate + H2O = 1D-myo-inositol hexakisphosphate + phosphate + H(+). The catalysed reaction is 1,5-bis(diphospho)-1D-myo-inositol 2,3,4,6-tetrakisphosphate + H2O = 1-diphospho-1D-myo-inositol 2,3,4,5,6-pentakisphosphate + phosphate + 2 H(+). It carries out the reaction 3,5-bis(diphospho)-1D-myo-inositol 1,2,4,6-tetrakisphosphate + H2O = 3-diphospho-1D-myo-inositol 1,2,4,5,6-pentakisphosphate + phosphate + 2 H(+). The enzyme catalyses 6-diphospho-1D-myo-inositol pentakisphosphate + H2O = 1D-myo-inositol hexakisphosphate + phosphate + H(+). It catalyses the reaction 5-diphospho-1D-myo-inositol 1,3,4,6-tetrakisphosphate + H2O = 1D-myo-inositol 1,3,4,5,6-pentakisphosphate + phosphate + H(+). Inhibited by manganese, calcium and zinc ions but not magnesium ions. In terms of biological role, cleaves the beta-phosphate at the 5-position of soluble inositol pyrophosphates. Has highest activity on 5-diphosphoinositol 1,2,3,4,6-pentakisphosphate (5-InsP(7)), 1,5-bis-diphosphoinositol 2,3,4,6-tetrakisphosphate (1,5-InsP(8)) and 3,5-InsP(8), but has weak activity against 1-diphosphoinositol 2,3,4,5,6-pentakisphosphate (1-InsP(7)). Dephosphorylates the phosphoinositides PI(3,4,5)P3, PI(3,5)P2, but not PI(3)P, PI(3,4)P2 or PI(4,5)P2. Possesses phosphotyrosine phosphatase activity in vitro, and can hydrolyze para-nitrophenyl phosphate, O-methylfluorescein phosphate, polyphosphate and ATP. This is Inositol diphosphatase DSP1 from Arabidopsis thaliana (Mouse-ear cress).